The chain runs to 194 residues: Cupin-domain-containing oxidoreductase virC (194 aa).

One can recognise a Cupin type-2 domain in the interval 106 to 175; the sequence is IDFAPNVISP…GTLPGRMMWV (70 aa).

This sequence belongs to the virC family.

The protein operates within secondary metabolite biosynthesis. Functionally, cupin-domain-containing oxidoreductase; part of the gene cluster that mediates the biosynthesis of virensols and trichoxide, fungal natural products that contain or are derived from a salicylaldehyde core. The pathway begins with the synthesis of the reduced chain in virensol C by the highly reducing polyketide synthase virA via condensation of one acetate and 8 malonate units. VirA has interesting programming rules since the first 2 ketides are fully reduced, the 3 following ketides undergo beta-dehydration, and the last 3 ketides are only reduced to beta-hydroxys to yield the trihydroxy portion. The production of aldehyde virensol C by virA alone is surprising, since virA does not contain a reductase (R) domain that is typically associated with reductive product release in HRPKS. The cupin-domain enzyme virC is involved in enhancing virA product turnover. The short-chain dehydrogenase virB then oxidizes the C-7 alcohol of virensol C to a ketone, yielding virensol D. Virensol D is further transformed to salicylaldehyde 5-deoxyaurocitrin by the short-chain dehydrogenase virD. VirD catalyzes the dehydrogenation of C-3 to form the beta-ketone aldehyde, which is followed by the generation of the nucleophilic C-2 that is required for the intramolecular aldol condensation between C-2 and C-7, itself followed by dehydration and aromatization which leads to salicylaldehyde 5-deoxyaurocitrin. While the dehydrogenation of virensol D is definitely catalyzed by virD, the aldol condensation and dehydration may be uncatalyzed or assisted by virD. The short chain dehydrogenase virG then converts salicylaldehyde 5-deoxyaurocitrin into virensol B which is further hydroxylated by the cytochrome P450 monooxygenase virE to yield the hydroquinone virensol A. VirI then may oxidize virensol A to form the quinone, while virH performs the epoxidation. Finally, the two remaining short-chain dehydrogenases, virK and virL, are probably responsible for reducing the ketones to the corresponding alcohols to furnish the epoxycyclohexanol structure in trichoxide. This Hypocrea virens (strain Gv29-8 / FGSC 10586) (Gliocladium virens) protein is Cupin-domain-containing oxidoreductase virC.